The sequence spans 121 residues: Chorion class CA protein ERA.4 (121 aa).

The N-terminal stretch at 1–23 is a signal peptide; that stretch reads MSSSFFCFFLFCFQTCLIQNVYS. Residues 24–57 form a left arm region; it reads QCLGRVGPGGPPLGPYGGPLGGPGYGPVGYGGCG. Residues 58-105 are central domain; the sequence is GYGGSGIGNVAVAGELPVAGSAAVLGQVPVIGAVEFAGPACAVGSVSI. Positions 106–121 are right arm; sequence SGACGPTCGCGGSPYY.

It belongs to the chorion protein family.

This protein is one of many from the eggshell of the silk moth. This Bombyx mori (Silk moth) protein is Chorion class CA protein ERA.4 (ERA.4).